The following is a 313-amino-acid chain: Ribosomal RNA small subunit methyltransferase H (313 aa).

S-adenosyl-L-methionine-binding positions include 35–37 (GGH), D55, F79, D101, and Q108.

This sequence belongs to the methyltransferase superfamily. RsmH family.

Its subcellular location is the cytoplasm. It catalyses the reaction cytidine(1402) in 16S rRNA + S-adenosyl-L-methionine = N(4)-methylcytidine(1402) in 16S rRNA + S-adenosyl-L-homocysteine + H(+). Functionally, specifically methylates the N4 position of cytidine in position 1402 (C1402) of 16S rRNA. In Salmonella paratyphi A (strain ATCC 9150 / SARB42), this protein is Ribosomal RNA small subunit methyltransferase H.